Here is a 465-residue protein sequence, read N- to C-terminus: UDP-N-acetylmuramoylalanine--D-glutamate ligase (465 aa).

127 to 133 is a binding site for ATP; that stretch reads GSNGKST.

Belongs to the MurCDEF family.

Its subcellular location is the cytoplasm. The catalysed reaction is UDP-N-acetyl-alpha-D-muramoyl-L-alanine + D-glutamate + ATP = UDP-N-acetyl-alpha-D-muramoyl-L-alanyl-D-glutamate + ADP + phosphate + H(+). The protein operates within cell wall biogenesis; peptidoglycan biosynthesis. Cell wall formation. Catalyzes the addition of glutamate to the nucleotide precursor UDP-N-acetylmuramoyl-L-alanine (UMA). In Cereibacter sphaeroides (strain ATCC 17025 / ATH 2.4.3) (Rhodobacter sphaeroides), this protein is UDP-N-acetylmuramoylalanine--D-glutamate ligase.